We begin with the raw amino-acid sequence, 452 residues long: Pup--protein ligase 1 (452 aa).

Glu-9 lines the Mg(2+) pocket. Arg-53 provides a ligand contact to ATP. Position 55 (Tyr-55) interacts with Mg(2+). The active-site Proton acceptor is the Asp-57. Residue Glu-63 participates in Mg(2+) binding. Residues Thr-66 and Trp-419 each contribute to the ATP site.

Belongs to the Pup ligase/Pup deamidase family. Pup-conjugating enzyme subfamily.

The catalysed reaction is ATP + [prokaryotic ubiquitin-like protein]-L-glutamate + [protein]-L-lysine = ADP + phosphate + N(6)-([prokaryotic ubiquitin-like protein]-gamma-L-glutamyl)-[protein]-L-lysine.. Its pathway is protein degradation; proteasomal Pup-dependent pathway. It functions in the pathway protein modification; protein pupylation. Functionally, catalyzes the covalent attachment of the prokaryotic ubiquitin-like protein modifier Pup to the proteasomal substrate proteins, thereby targeting them for proteasomal degradation. This tagging system is termed pupylation. The ligation reaction involves the side-chain carboxylate of the C-terminal glutamate of Pup and the side-chain amino group of a substrate lysine. This chain is Pup--protein ligase 1, found in Rhodococcus erythropolis (Arthrobacter picolinophilus).